Reading from the N-terminus, the 119-residue chain is Urease subunit beta (119 aa).

It belongs to the urease beta subunit family. In terms of assembly, heterotrimer of UreA (gamma), UreB (beta) and UreC (alpha) subunits. Three heterotrimers associate to form the active enzyme.

It is found in the cytoplasm. It catalyses the reaction urea + 2 H2O + H(+) = hydrogencarbonate + 2 NH4(+). It functions in the pathway nitrogen metabolism; urea degradation; CO(2) and NH(3) from urea (urease route): step 1/1. This chain is Urease subunit beta, found in Tolumonas auensis (strain DSM 9187 / NBRC 110442 / TA 4).